We begin with the raw amino-acid sequence, 170 residues long: uncharacterized protein (170 aa).

A helical transmembrane segment spans residues 96 to 116 (FSAISIGSFPIVLFLSLFFFD).

It localises to the membrane. This is an uncharacterized protein from Borreliella burgdorferi (strain ATCC 35210 / DSM 4680 / CIP 102532 / B31) (Borrelia burgdorferi).